The primary structure comprises 332 residues: 2,3-diketo-L-gulonate reductase (332 aa).

The active-site Proton donor is the His-44. NAD(+) contacts are provided by residues 168 to 174, 224 to 225, and 304 to 306; these read ITMVDMS, WK, and GHE.

Belongs to the LDH2/MDH2 oxidoreductase family. DlgD subfamily. In terms of assembly, homodimer.

The protein localises to the cytoplasm. It carries out the reaction 3-dehydro-L-gulonate + NAD(+) = 2,3-dioxo-L-gulonate + NADH + H(+). It catalyses the reaction 3-dehydro-L-gulonate + NADP(+) = 2,3-dioxo-L-gulonate + NADPH + H(+). Functionally, catalyzes the reduction of 2,3-diketo-L-gulonate in the presence of NADH, to form 3-keto-L-gulonate. The sequence is that of 2,3-diketo-L-gulonate reductase from Escherichia coli O139:H28 (strain E24377A / ETEC).